We begin with the raw amino-acid sequence, 338 residues long: Anthranilate phosphoribosyltransferase (338 aa).

5-phospho-alpha-D-ribose 1-diphosphate-binding positions include Gly-78, 81–82 (GD), Ser-86, 88–91 (NIST), 106–114 (KHGNKSITS), and Ser-118. Gly-78 contacts anthranilate. A Mg(2+)-binding site is contributed by Ser-90. An anthranilate-binding site is contributed by Asn-109. Arg-163 contributes to the anthranilate binding site. 2 residues coordinate Mg(2+): Asp-222 and Glu-223.

The protein belongs to the anthranilate phosphoribosyltransferase family. As to quaternary structure, homodimer. It depends on Mg(2+) as a cofactor.

The catalysed reaction is N-(5-phospho-beta-D-ribosyl)anthranilate + diphosphate = 5-phospho-alpha-D-ribose 1-diphosphate + anthranilate. Its pathway is amino-acid biosynthesis; L-tryptophan biosynthesis; L-tryptophan from chorismate: step 2/5. Catalyzes the transfer of the phosphoribosyl group of 5-phosphorylribose-1-pyrophosphate (PRPP) to anthranilate to yield N-(5'-phosphoribosyl)-anthranilate (PRA). The polypeptide is Anthranilate phosphoribosyltransferase (Staphylococcus carnosus (strain TM300)).